The chain runs to 620 residues: Chaperone protein DnaK (620 aa).

Phosphothreonine; by autocatalysis is present on Thr197. The tract at residues 597-620 (AMANKNNAEQPKKKDDDVIDAEVE) is disordered.

It belongs to the heat shock protein 70 family.

Acts as a chaperone. In Helicobacter pylori (strain Shi470), this protein is Chaperone protein DnaK.